The sequence spans 602 residues: Glutaminase liver isoform, mitochondrial (602 aa).

Residues 1 to 14 constitute a mitochondrion transit peptide; it reads MRSMRALQNALSRA. 2 disordered regions span residues 1–29 and 45–66; these read MRSM…PSRG and AQGR…ASHS. S219 provides a ligand contact to substrate. An N6-succinyllysine modification is found at K253. N268 contacts substrate. An N6-acetyllysine mark is found at K279 and K284. The substrate site is built by E314 and N321. At K329 the chain carries N6-acetyllysine. Substrate contacts are provided by Y347, Y399, and V417. 2 ANK repeats span residues 518–551 and 552–585; these read DSRT…VKDR and WGNI…SETQ.

This sequence belongs to the glutaminase family. In terms of assembly, homotetramer, dimer of dimers. Does not assemble into higher oligomers. Interacts with the PDZ domain of the syntrophin SNTA1. Interacts with the PDZ domain of TAX1BP3.

The protein localises to the mitochondrion. The enzyme catalyses L-glutamine + H2O = L-glutamate + NH4(+). Enzyme activity is not stimulated by phosphate. Phosphate increases kcat, but decreases substrate affinity, resulting in unchanged enzyme activity. Functionally, plays an important role in the regulation of glutamine catabolism. Promotes mitochondrial respiration and increases ATP generation in cells by catalyzing the synthesis of glutamate and alpha-ketoglutarate. Increases cellular anti-oxidant function via NADH and glutathione production. May play a role in preventing tumor proliferation. The protein is Glutaminase liver isoform, mitochondrial (Gls2) of Mus musculus (Mouse).